The primary structure comprises 427 residues: MLFSKISSAILLTAASFALTSARPVSKQSDADDKLLALPLTSVNRKYSQTKHGQQAAEKLGGIKAFAEGDGSVDTPGLYDFDLEEYAIPVSIGTPGQDFYLLFDTGSSDTWVPHKGCDNSEGCVGKRFFDPSSSSTFKETDYNLNITYGTGGANGIYFRDSITVGGATVKQQTLAYVDNVSGPTAEQSPDSELFLDGMFGAAYPDNTAMEAEYGDTYNTVHVNLYKQGLISSPVFSVYMNTNDGGGQVVFGGANNTLLGGDIQYTDVLKSRGGYFFWDAPVTGVKIDGADAVSFDGAQAFTIDTGTNFFIAPSSFAEKVVKAALPDATESQQGYTVPCSKYQDSKTTFSLVLQKSGSSSDTIDVSVPISKMLLPVDKSGETCMFIVLPDGGNQFIVGNLFLRFFVNVYDFGKNRIGFAPLASGYENN.

Positions 1-22 (MLFSKISSAILLTAASFALTSA) are cleaved as a signal peptide. Positions 23–66 (RPVSKQSDADDKLLALPLTSVNRKYSQTKHGQQAAEKLGGIKAF) are cleaved as a propeptide — activation peptide. The region spanning 86–418 (YAIPVSIGTP…DFGKNRIGFA (333 aa)) is the Peptidase A1 domain. Asp-104 is a catalytic residue. Cysteines 117 and 123 form a disulfide. Asn-254 is a glycosylation site (N-linked (GlcNAc...) asparagine). Residue Asp-303 is part of the active site. The cysteines at positions 338 and 382 are disulfide-linked.

It belongs to the peptidase A1 family.

The catalysed reaction is Hydrolysis of proteins, favoring hydrophobic residues at P1 and P1'. Clots milk. Does not accept Lys at P1, and hence does not activate trypsinogen.. Its function is as follows. This enzyme, capable of clotting milk is frequently used for cheese production. The sequence is that of Mucorpepsin from Rhizomucor pusillus.